A 619-amino-acid chain; its full sequence is DNA mismatch repair protein MutL (619 aa).

The tract at residues 339–400 (AEKDDPPAPR…GGASWPHAQP (62 aa)) is disordered.

It belongs to the DNA mismatch repair MutL/HexB family.

In terms of biological role, this protein is involved in the repair of mismatches in DNA. It is required for dam-dependent methyl-directed DNA mismatch repair. May act as a 'molecular matchmaker', a protein that promotes the formation of a stable complex between two or more DNA-binding proteins in an ATP-dependent manner without itself being part of a final effector complex. The chain is DNA mismatch repair protein MutL from Klebsiella pneumoniae subsp. pneumoniae (strain ATCC 700721 / MGH 78578).